Consider the following 142-residue polypeptide: Protein SprT-like (142 aa).

In terms of domain architecture, SprT-like spans 4–138 (YVKKVSIEDF…FACGYCHGRL (135 aa)). Zn(2+) is bound at residue H62. E63 is a catalytic residue. Residue H66 coordinates Zn(2+).

This sequence belongs to the SprT family. The cofactor is Zn(2+).

It localises to the cytoplasm. The polypeptide is Protein SprT-like (Streptococcus agalactiae serotype Ia (strain ATCC 27591 / A909 / CDC SS700)).